Here is a 101-residue protein sequence, read N- to C-terminus: Small ribosomal subunit protein bS6 (101 aa).

This sequence belongs to the bacterial ribosomal protein bS6 family.

Functionally, binds together with bS18 to 16S ribosomal RNA. The sequence is that of Small ribosomal subunit protein bS6 from Nitratidesulfovibrio vulgaris (strain DSM 19637 / Miyazaki F) (Desulfovibrio vulgaris).